A 199-amino-acid polypeptide reads, in one-letter code: dITP/XTP pyrophosphatase (199 aa).

Substrate is bound at residue 7 to 12 (TSNRGK). Residue D74 is the Proton acceptor of the active site. Position 74 (D74) interacts with Mg(2+). Residues S75, 156 to 159 (FGYD), K179, and 184 to 185 (HR) each bind substrate.

Belongs to the HAM1 NTPase family. As to quaternary structure, homodimer. Mg(2+) is required as a cofactor.

It catalyses the reaction XTP + H2O = XMP + diphosphate + H(+). It carries out the reaction dITP + H2O = dIMP + diphosphate + H(+). The catalysed reaction is ITP + H2O = IMP + diphosphate + H(+). Its function is as follows. Pyrophosphatase that catalyzes the hydrolysis of nucleoside triphosphates to their monophosphate derivatives, with a high preference for the non-canonical purine nucleotides XTP (xanthosine triphosphate), dITP (deoxyinosine triphosphate) and ITP. Seems to function as a house-cleaning enzyme that removes non-canonical purine nucleotides from the nucleotide pool, thus preventing their incorporation into DNA/RNA and avoiding chromosomal lesions. The polypeptide is dITP/XTP pyrophosphatase (Sulfurimonas denitrificans (strain ATCC 33889 / DSM 1251) (Thiomicrospira denitrificans (strain ATCC 33889 / DSM 1251))).